The following is a 335-amino-acid chain: DNA-directed RNA polymerase subunit alpha (335 aa).

The tract at residues 1–233 is alpha N-terminal domain (alpha-NTD); the sequence is MMLNATEFLT…QQISIFVDLE (233 aa). Residues 247–335 form an alpha C-terminal domain (alpha-CTD) region; that stretch reads VDPVLLRPVD…VDDRFSYRSR (89 aa).

Belongs to the RNA polymerase alpha chain family. In terms of assembly, homodimer. The RNAP catalytic core consists of 2 alpha, 1 beta, 1 beta' and 1 omega subunit. When a sigma factor is associated with the core the holoenzyme is formed, which can initiate transcription.

It catalyses the reaction RNA(n) + a ribonucleoside 5'-triphosphate = RNA(n+1) + diphosphate. Its function is as follows. DNA-dependent RNA polymerase catalyzes the transcription of DNA into RNA using the four ribonucleoside triphosphates as substrates. The chain is DNA-directed RNA polymerase subunit alpha from Psychrobacter arcticus (strain DSM 17307 / VKM B-2377 / 273-4).